The following is a 500-amino-acid chain: Pyoverdin chromophore biosynthetic protein PvcC (500 aa).

It depends on FAD as a cofactor.

The protein operates within siderophore biosynthesis; pyoverdin biosynthesis. This Pseudomonas aeruginosa (strain ATCC 15692 / DSM 22644 / CIP 104116 / JCM 14847 / LMG 12228 / 1C / PRS 101 / PAO1) protein is Pyoverdin chromophore biosynthetic protein PvcC (pvcC).